Consider the following 116-residue polypeptide: Large ribosomal subunit protein uL18 (116 aa).

It belongs to the universal ribosomal protein uL18 family. In terms of assembly, part of the 50S ribosomal subunit; part of the 5S rRNA/L5/L18/L25 subcomplex. Contacts the 5S and 23S rRNAs.

In terms of biological role, this is one of the proteins that bind and probably mediate the attachment of the 5S RNA into the large ribosomal subunit, where it forms part of the central protuberance. This Shewanella denitrificans (strain OS217 / ATCC BAA-1090 / DSM 15013) protein is Large ribosomal subunit protein uL18.